The sequence spans 211 residues: Uracil phosphoribosyltransferase (211 aa).

Residues arginine 78, arginine 103, and 130-138 each bind 5-phospho-alpha-D-ribose 1-diphosphate; that span reads DPMLATGGT. Uracil-binding positions include isoleucine 195 and 200–202; that span reads GDA. Aspartate 201 contacts 5-phospho-alpha-D-ribose 1-diphosphate.

The protein belongs to the UPRTase family. Mg(2+) is required as a cofactor.

The catalysed reaction is UMP + diphosphate = 5-phospho-alpha-D-ribose 1-diphosphate + uracil. It participates in pyrimidine metabolism; UMP biosynthesis via salvage pathway; UMP from uracil: step 1/1. Its activity is regulated as follows. Allosterically activated by GTP. Its function is as follows. Catalyzes the conversion of uracil and 5-phospho-alpha-D-ribose 1-diphosphate (PRPP) to UMP and diphosphate. This is Uracil phosphoribosyltransferase from Paenarthrobacter aurescens (strain TC1).